The following is a 307-amino-acid chain: MATH domain and coiled-coil domain-containing protein At3g58380 (307 aa).

Residues 6-132 (DKKFVWVIKD…CREITIVIEV (127 aa)) form the MATH domain. A coiled-coil region spans residues 238–290 (KVDWLEKKLKEVKEKKKNVDNGKARLQQIEEDLQKLNQKRLDLKDILDKEKAN).

This chain is MATH domain and coiled-coil domain-containing protein At3g58380, found in Arabidopsis thaliana (Mouse-ear cress).